Reading from the N-terminus, the 1100-residue chain is DNA repair protein RAD1 (1100 aa).

The segment at 1–47 (MSQLFYQGDSDDELQEELTRQTTQASQSSKIKNEDEPDDSNHLNEVE) is disordered. Over residues 20–30 (RQTTQASQSSK) the composition is skewed to polar residues. A compositionally biased stretch (basic and acidic residues) spans 31-47 (IKNEDEPDDSNHLNEVE). Serine 613 bears the Phosphoserine mark. Residues 821-901 (VVIVDTREFN…YPTLLIEFDE (81 aa)) enclose the ERCC4 domain. Residues 1063 to 1100 (EKEEQEQESTDENLESPGKTTDDNALHDHHNDVPEAPV) are disordered. Positions 1065 to 1076 (EEQEQESTDENL) are enriched in acidic residues. Serine 1071 carries the phosphoserine modification. The residue at position 1072 (threonine 1072) is a Phosphothreonine. Over residues 1082 to 1100 (TTDDNALHDHHNDVPEAPV) the composition is skewed to basic and acidic residues.

It belongs to the XPF family. As to quaternary structure, component of the nucleotide excision repair factor 1 (NEF1) complex consisting of RAD1, RAD10 and RAD14. Interacts with SAW1.

The protein localises to the nucleus. Functionally, involved in nucleotide excision repair of DNA damaged with UV light, bulky adducts, or cross-linking agents. Along with RAD10 forms an endonuclease that specifically degrades single-stranded DNA. The chain is DNA repair protein RAD1 (RAD1) from Saccharomyces cerevisiae (strain ATCC 204508 / S288c) (Baker's yeast).